Consider the following 132-residue polypeptide: Small ribosomal subunit protein uS13 (132 aa).

Residues 101 to 125 show a composition bias toward basic residues; the sequence is RGLPVRGQRTKTNARTRKGPRKTVA. Residues 101 to 132 are disordered; it reads RGLPVRGQRTKTNARTRKGPRKTVANKKIETR.

This sequence belongs to the universal ribosomal protein uS13 family. In terms of assembly, part of the 30S ribosomal subunit. Forms a loose heterodimer with protein S19. Forms two bridges to the 50S subunit in the 70S ribosome.

In terms of biological role, located at the top of the head of the 30S subunit, it contacts several helices of the 16S rRNA. In the 70S ribosome it contacts the 23S rRNA (bridge B1a) and protein L5 of the 50S subunit (bridge B1b), connecting the 2 subunits; these bridges are implicated in subunit movement. Contacts the tRNAs in the A and P-sites. In Ureaplasma parvum serovar 3 (strain ATCC 27815 / 27 / NCTC 11736), this protein is Small ribosomal subunit protein uS13.